The following is a 408-amino-acid chain: Sporulation integral membrane protein YlbJ (408 aa).

Helical transmembrane passes span 6 to 26 (INTL…ISHP), 43 to 63 (VVFP…GFGI), 81 to 101 (VPGV…PAGA), 131 to 151 (LFIF…GILL), 214 to 234 (VTSS…FSVF), 294 to 314 (IIVS…VAGI), 324 to 344 (PFFI…MLLW), and 377 to 397 (LLVQ…IIIF).

Its subcellular location is the cell membrane. Required for spore cortex formation. In Bacillus subtilis (strain 168), this protein is Sporulation integral membrane protein YlbJ (ylbJ).